Reading from the N-terminus, the 417-residue chain is Serine hydroxymethyltransferase (417 aa).

(6S)-5,6,7,8-tetrahydrofolate-binding positions include Leu-112 and 116 to 118 (GHL). N6-(pyridoxal phosphate)lysine is present on Lys-221. Glu-247 contributes to the (6S)-5,6,7,8-tetrahydrofolate binding site.

It belongs to the SHMT family. In terms of assembly, homodimer. It depends on pyridoxal 5'-phosphate as a cofactor.

The protein localises to the cytoplasm. It carries out the reaction (6R)-5,10-methylene-5,6,7,8-tetrahydrofolate + glycine + H2O = (6S)-5,6,7,8-tetrahydrofolate + L-serine. It functions in the pathway one-carbon metabolism; tetrahydrofolate interconversion. The protein operates within amino-acid biosynthesis; glycine biosynthesis; glycine from L-serine: step 1/1. Catalyzes the reversible interconversion of serine and glycine with tetrahydrofolate (THF) serving as the one-carbon carrier. This reaction serves as the major source of one-carbon groups required for the biosynthesis of purines, thymidylate, methionine, and other important biomolecules. Also exhibits THF-independent aldolase activity toward beta-hydroxyamino acids, producing glycine and aldehydes, via a retro-aldol mechanism. The protein is Serine hydroxymethyltransferase of Borrelia hermsii (strain HS1 / DAH).